The chain runs to 144 residues: Maximins 2/H8 type 2 (144 aa).

The N-terminal stretch at methionine 1–alanine 18 is a signal peptide. Positions arginine 19–arginine 43 are excised as a propeptide. Asparagine 70 is subject to Asparagine amide. Positions threonine 74–arginine 123 are excised as a propeptide. Isoleucine 143 bears the Isoleucine amide mark.

This sequence belongs to the bombinin family. Expressed by the skin glands.

It localises to the secreted. In terms of biological role, maximin-2 shows antibacterial activity against both Gram-positive and Gram-negative bacteria. It also shows antimicrobial activity against the fungus C.albicans, but not against A.flavus nor P.uticale. It has little hemolytic activity. Its function is as follows. Maximin-H8 shows antimicrobial activity against bacteria and against the fungus C.albicans. Shows strong hemolytic activity. In Bombina maxima (Giant fire-bellied toad), this protein is Maximins 2/H8 type 2.